A 217-amino-acid polypeptide reads, in one-letter code: Protein-L-isoaspartate O-methyltransferase (217 aa).

Ser-64 is a catalytic residue.

The protein belongs to the methyltransferase superfamily. L-isoaspartyl/D-aspartyl protein methyltransferase family.

Its subcellular location is the cytoplasm. The enzyme catalyses [protein]-L-isoaspartate + S-adenosyl-L-methionine = [protein]-L-isoaspartate alpha-methyl ester + S-adenosyl-L-homocysteine. Functionally, catalyzes the methyl esterification of L-isoaspartyl residues in peptides and proteins that result from spontaneous decomposition of normal L-aspartyl and L-asparaginyl residues. It plays a role in the repair and/or degradation of damaged proteins. The polypeptide is Protein-L-isoaspartate O-methyltransferase (Rhodopseudomonas palustris (strain BisB5)).